A 759-amino-acid chain; its full sequence is Olfactomedin-like protein 2B (759 aa).

Residues 1-20 form the signal peptide; that stretch reads MAKSLLLVLCFALVTTLGWG. 2 coiled-coil regions span residues 40–68 and 179–209; these read TEDETLQNEADNQENVLSQLLGDYDKVKA and KLEEEISKNLTKENEQIREDVEEIRTEMNKR. Asn187 and Asn213 each carry an N-linked (GlcNAc...) asparagine glycan. 2 disordered regions span residues 346-396 and 456-494; these read TRRP…VSAS and THTAPVPPPPVRTDSPGKDSTARQGTVPPGPTLSPEEED. Residues 356–396 show a composition bias toward low complexity; that stretch reads AAVTADAGTTSAGTPTTALPSARLPASTAAPSTPDPAVSAS. An Olfactomedin-like domain is found at 502 to 759; sequence RCKDTLSTIT…QVTYHVIFAY (258 aa). Cys503 and Cys689 form a disulfide bridge. The N-linked (GlcNAc...) asparagine glycan is linked to Asn704.

Homodimer. Binds to heparin and chondroitin sulfate E. Post-translationally, O-glycosylated and N-glycosylated.

The protein resides in the secreted. The protein is Olfactomedin-like protein 2B (OLFML2B) of Bos taurus (Bovine).